A 361-amino-acid chain; its full sequence is sn-glycerol-3-phosphate import ATP-binding protein UgpC (361 aa).

One can recognise an ABC transporter domain in the interval 4–235 (LSLKGIRKSY…PETVFVAGFI (232 aa)). 37–44 (GPSGCGKS) provides a ligand contact to ATP.

It belongs to the ABC transporter superfamily. sn-glycerol-3-phosphate importer (TC 3.A.1.1.3) family. In terms of assembly, the complex is composed of two ATP-binding proteins (UgpC), two transmembrane proteins (UgpA and UgpE) and a solute-binding protein (UgpB).

The protein localises to the cell inner membrane. It catalyses the reaction sn-glycerol 3-phosphate(out) + ATP + H2O = sn-glycerol 3-phosphate(in) + ADP + phosphate + H(+). Functionally, part of the ABC transporter complex UgpBAEC involved in sn-glycerol-3-phosphate (G3P) import. Responsible for energy coupling to the transport system. The chain is sn-glycerol-3-phosphate import ATP-binding protein UgpC from Burkholderia ambifaria (strain ATCC BAA-244 / DSM 16087 / CCUG 44356 / LMG 19182 / AMMD) (Burkholderia cepacia (strain AMMD)).